Consider the following 1196-residue polypeptide: Phosphatidylinositol-3,5-bisphosphate 3-phosphatase MTMR3 (1196 aa).

Ser8 is modified (phosphoserine). In terms of domain architecture, Myotubularin phosphatase spans 155 to 576 (EHVTSRFKNE…RNLMLWSAVY (422 aa)). Residues Asn326, Asn351, and Ile352 each contribute to the a 1,2-diacyl-sn-glycero-3-phospho-(1D-myo-inositol-3,5-bisphosphate) site. 3 residues coordinate a 1,2-diacyl-sn-glycero-3-phospho-(1D-myo-inositol-3-phosphate): Asn326, Asn351, and Ile352. Cys413 (phosphocysteine intermediate) is an active-site residue. Residues Ser414, Asp415, Gly416, Trp417, Asp418, Arg419, Lys455, and Arg459 each contribute to the a 1,2-diacyl-sn-glycero-3-phospho-(1D-myo-inositol-3,5-bisphosphate) site. 6 residues coordinate a 1,2-diacyl-sn-glycero-3-phospho-(1D-myo-inositol-3-phosphate): Ser414, Asp415, Gly416, Trp417, Asp418, and Arg419. Arg459 is a binding site for a 1,2-diacyl-sn-glycero-3-phospho-(1D-myo-inositol-3-phosphate). A disordered region spans residues 587-612 (DDSCAPYPVPGTSPDEPPLSRLPKTR). Residues 593 to 603 (YPVPGTSPDEP) show a composition bias toward pro residues. Ser613, Ser633, Ser647, and Ser651 each carry phosphoserine. Disordered regions lie at residues 697–719 (TKEESGVEEPTHRGHTEVPEVKE) and 855–900 (ESGP…HRTS). At Ser907 the chain carries Phosphoserine. Over residues 993–1008 (NSHSGRPSTTSSPDQP) the composition is skewed to polar residues. The interval 993 to 1019 (NSHSGRPSTTSSPDQPSRSHLDDDGMP) is disordered. The stretch at 1027-1060 (QRLRQIESGHQQEVETLKKQVQELKSRLESQYLT) forms a coiled coil. Phosphoserine is present on Ser1062. Residues 1117–1177 (DHLAAHCYAC…VCKSCYSSLH (61 aa)) form an FYVE-type zinc finger. Zn(2+)-binding residues include Cys1123, Cys1126, Cys1139, Cys1142, Cys1147, Cys1150, Cys1169, and Cys1172.

The protein belongs to the protein-tyrosine phosphatase family. Non-receptor class myotubularin subfamily. In terms of assembly, forms heterodimers with MTMR4 that recruit both CEP55 and PLK1; occurs during early mitosis, regulates the phosphorylation of CEP55 by PLK1 and its recruitment to the midbody where it mediates cell abscission.

It localises to the cytoplasm. Its subcellular location is the cytosol. The protein localises to the membrane. The catalysed reaction is a 1,2-diacyl-sn-glycero-3-phospho-(1D-myo-inositol-3,5-bisphosphate) + H2O = a 1,2-diacyl-sn-glycero-3-phospho-(1D-myo-inositol-5-phosphate) + phosphate. It catalyses the reaction a 1,2-diacyl-sn-glycero-3-phospho-(1D-myo-inositol-3-phosphate) + H2O = a 1,2-diacyl-sn-glycero-3-phospho-(1D-myo-inositol) + phosphate. It carries out the reaction 1,2-dihexadecanoyl-sn-glycero-3-phospho-(1D-myo-inositol-3-phosphate) + H2O = 1,2-dihexadecanoyl-sn-glycero-3-phospho-(1D-myo-inositol) + phosphate. The enzyme catalyses 1,2-dioctanoyl-sn-glycero-3-phospho-(1-D-myo-inositol-3-phosphate) + H2O = 1,2-dioctanoyl-sn-glycero-3-phospho-(1D-myo-inositol) + phosphate. The catalysed reaction is 1,2-dihexadecanoyl-sn-glycero-3-phospho-(1D-myo-inositol-3,5-phosphate) + H2O = 1,2-dihexadecanoyl-sn-glycero-3-phospho-(1D-myo-inositol-5-phosphate) + phosphate. Its function is as follows. Lipid phosphatase that specifically dephosphorylates the D-3 position of phosphatidylinositol 3-phosphate and phosphatidylinositol 3,5-bisphosphate, generating phosphatidylinositol and phosphatidylinositol 5-phosphate. Decreases the levels of phosphatidylinositol 3-phosphate, a phospholipid found in cell membranes where it acts as key regulator of both cell signaling and intracellular membrane traffic. Could also have a molecular sequestering/adapter activity and regulate biological processes independently of its phosphatase activity. It includes the regulation of midbody abscission during mitotic cytokinesis. The polypeptide is Phosphatidylinositol-3,5-bisphosphate 3-phosphatase MTMR3 (Mus musculus (Mouse)).